The following is a 184-amino-acid chain: ADP-ribosylation factor-like protein 8c (184 aa).

An intramembrane region (note=Mediates targeting to membranes) is located at residues 1-18 (MGLWDSLLNWLRSLFFKQ). GTP contacts are provided by residues 29 to 34 (NAGKTS), 48 to 51 (MIPT), 70 to 74 (DLGGQ), and 129 to 132 (NKID).

This sequence belongs to the small GTPase superfamily. Arf family. In terms of assembly, interacts with tubulin.

Its subcellular location is the late endosome membrane. It localises to the lysosome membrane. The protein resides in the cytoplasm. The protein localises to the cytoskeleton. It is found in the spindle. Its function is as follows. May play a role in lysosome motility. May play a role in chromosome segregation. In terms of biological role, (Microbial infection) Component of tomato mosaic virus (ToMV) RNA replication complexes. Required for tobamovirus multiplication, especially for efficient negative-strand RNA synthesis and viral RNA capping. The sequence is that of ADP-ribosylation factor-like protein 8c from Arabidopsis thaliana (Mouse-ear cress).